We begin with the raw amino-acid sequence, 316 residues long: MNFQQLKIIREAARQDYNLTEVANMLFTSQSGVSRHIRELEDELGIEIFVRRGKRLLGMTEPGKALLVIAERILNEASNVRRLADLFTNDTSGVLTIATTHTQARYSLPEVIKAFRELFPEVRLELIQGTPQEIATLLQNGEADIGIASERLSNDPQLVAFPWFRWHHSLLVPHDHPLTQISPLTLESIAKWPLITYRQGITGRSRIDDAFARKGLLADIVLSAQDSDVIKTYVALGLGIGLVAEQSSGEQEEENLIRLDTRHLFDANTVWLGLKRGQLQRNYVWRFLELCNAGLSVEDIKRQVMESSEEEIDYQI.

The HTH lysR-type domain maps to 1 to 59 (MNFQQLKIIREAARQDYNLTEVANMLFTSQSGVSRHIRELEDELGIEIFVRRGKRLLGM). Residues 19–38 (LTEVANMLFTSQSGVSRHIR) constitute a DNA-binding region (H-T-H motif).

This sequence belongs to the LysR transcriptional regulatory family.

Its function is as follows. May be an accessory regulatory protein within the cys regulon. This is HTH-type transcriptional regulator cbl (cbl) from Escherichia coli (strain K12).